A 306-amino-acid chain; its full sequence is Light-independent protochlorophyllide reductase iron-sulfur ATP-binding protein (306 aa).

The interval M1 to Q31 is disordered. Residues G50–T55 and K79 contribute to the ATP site. S54 contacts Mg(2+). Residues C135 and C169 each contribute to the [4Fe-4S] cluster site. Residue N220–R221 coordinates ATP.

The protein belongs to the NifH/BchL/ChlL family. As to quaternary structure, homodimer. Protochlorophyllide reductase is composed of three subunits; BchL, BchN and BchB. Requires [4Fe-4S] cluster as cofactor.

The catalysed reaction is chlorophyllide a + oxidized 2[4Fe-4S]-[ferredoxin] + 2 ADP + 2 phosphate = protochlorophyllide a + reduced 2[4Fe-4S]-[ferredoxin] + 2 ATP + 2 H2O. Its pathway is porphyrin-containing compound metabolism; bacteriochlorophyll biosynthesis (light-independent). Component of the dark-operative protochlorophyllide reductase (DPOR) that uses Mg-ATP and reduced ferredoxin to reduce ring D of protochlorophyllide (Pchlide) to form chlorophyllide a (Chlide). This reaction is light-independent. The L component serves as a unique electron donor to the NB-component of the complex, and binds Mg-ATP. The chain is Light-independent protochlorophyllide reductase iron-sulfur ATP-binding protein from Jannaschia sp. (strain CCS1).